Reading from the N-terminus, the 200-residue chain is Nascent polypeptide-associated complex subunit alpha (200 aa).

Residues 1–19 (MADPRVEELPEEEVKKTQV) are compositionally biased toward basic and acidic residues. 2 disordered regions span residues 1-54 (MADP…NEKK) and 118-165 (AAQQ…EDKD). A compositionally biased stretch (acidic residues) spans 20–34 (EDLDNSSDDESDIEA). Positions 49-114 (SRNEKKARKA…AKIEDLNASA (66 aa)) constitute an NAC-A/B domain. Basic and acidic residues predominate over residues 127–146 (AEHDHAGHTHEHEEAGKAKE). The span at 147–160 (EEEEDEGEEVDAEG) shows a compositional bias: acidic residues. The region spanning 161–200 (IEDKDIELVMTQANVSRKKAIKALKENDNDIVNSIMALSI) is the UBA domain.

Belongs to the NAC-alpha family. Part of the nascent polypeptide-associated complex (NAC), consisting of npc-1/egd2 and npc-2/egd1. NAC associates with ribosomes via npc-2/egd1.

The protein localises to the cytoplasm. Its subcellular location is the nucleus. Functionally, component of the nascent polypeptide-associated complex (NAC), a dynamic component of the ribosomal exit tunnel, protecting the emerging polypeptides from interaction with other cytoplasmic proteins to ensure appropriate nascent protein targeting. The NAC complex also promotes mitochondrial protein import by enhancing productive ribosome interactions with the outer mitochondrial membrane and blocks the inappropriate interaction of ribosomes translating non-secretory nascent polypeptides with translocation sites in the membrane of the endoplasmic reticulum. Npc-1/egd2 may also be involved in transcription regulation. The polypeptide is Nascent polypeptide-associated complex subunit alpha (npc-1) (Neurospora crassa (strain ATCC 24698 / 74-OR23-1A / CBS 708.71 / DSM 1257 / FGSC 987)).